The primary structure comprises 432 residues: Putative cyclin-F1-4 (432 aa).

It belongs to the cyclin family. Cyclin F subfamily.

This is Putative cyclin-F1-4 (CycF1-4) from Oryza sativa subsp. japonica (Rice).